A 318-amino-acid polypeptide reads, in one-letter code: Homoserine kinase (318 aa).

Position 97 to 107 (97 to 107 (PIGSGLGSSAC)) interacts with ATP.

The protein belongs to the GHMP kinase family. Homoserine kinase subfamily.

It localises to the cytoplasm. It carries out the reaction L-homoserine + ATP = O-phospho-L-homoserine + ADP + H(+). It participates in amino-acid biosynthesis; L-threonine biosynthesis; L-threonine from L-aspartate: step 4/5. Functionally, catalyzes the ATP-dependent phosphorylation of L-homoserine to L-homoserine phosphate. The sequence is that of Homoserine kinase from Aliivibrio salmonicida (strain LFI1238) (Vibrio salmonicida (strain LFI1238)).